A 159-amino-acid chain; its full sequence is Large ribosomal subunit protein uL11 (159 aa).

It belongs to the universal ribosomal protein uL11 family. In terms of assembly, part of the ribosomal stalk of the 50S ribosomal subunit. Interacts with L10 and the large rRNA to form the base of the stalk. L10 forms an elongated spine to which L12 dimers bind in a sequential fashion forming a multimeric L10(L12)X complex.

Forms part of the ribosomal stalk which helps the ribosome interact with GTP-bound translation factors. This Methanococcus vannielii (strain ATCC 35089 / DSM 1224 / JCM 13029 / OCM 148 / SB) protein is Large ribosomal subunit protein uL11.